The primary structure comprises 190 residues: Adenylate kinase (190 aa).

Residue 12–17 coordinates ATP; that stretch reads GSGKTT. Residues 34–63 form an NMP region; sequence STGELLRAEVASGSERGKIIEGFTSKGNLV. Residues threonine 35, arginine 40, 61–63, 88–91, and glutamine 95 each bind AMP; these read NLV and GYPR. The interval 130-136 is LID; that stretch reads GRARGAD. Arginine 131 serves as a coordination point for ATP. Residues arginine 133 and arginine 145 each coordinate AMP. Residue arginine 173 participates in ATP binding.

This sequence belongs to the adenylate kinase family. Monomer.

It is found in the cytoplasm. The enzyme catalyses AMP + ATP = 2 ADP. It participates in purine metabolism; AMP biosynthesis via salvage pathway; AMP from ADP: step 1/1. Functionally, catalyzes the reversible transfer of the terminal phosphate group between ATP and AMP. Plays an important role in cellular energy homeostasis and in adenine nucleotide metabolism. This Wolinella succinogenes (strain ATCC 29543 / DSM 1740 / CCUG 13145 / JCM 31913 / LMG 7466 / NCTC 11488 / FDC 602W) (Vibrio succinogenes) protein is Adenylate kinase.